Consider the following 200-residue polypeptide: Probable GTP-binding protein EngB (200 aa).

Positions 22–197 (DLPEIAFAGR…WQAIQDAVEE (176 aa)) constitute an EngB-type G domain. GTP is bound by residues 30-37 (GRSNVGKS), 57-61 (GRTQL), 78-81 (DLPG), 145-148 (TKCD), and 176-178 (FSA). 2 residues coordinate Mg(2+): Ser-37 and Thr-59.

The protein belongs to the TRAFAC class TrmE-Era-EngA-EngB-Septin-like GTPase superfamily. EngB GTPase family. It depends on Mg(2+) as a cofactor.

Necessary for normal cell division and for the maintenance of normal septation. In Trichlorobacter lovleyi (strain ATCC BAA-1151 / DSM 17278 / SZ) (Geobacter lovleyi), this protein is Probable GTP-binding protein EngB.